The chain runs to 144 residues: UPF0547 protein C16orf87 homolog (144 aa).

The tract at residues 33–112 (HAKQSQRLPP…EEKEKQEKEV (80 aa)) is disordered. The span at 35–45 (KQSQRLPPTSE) shows a compositional bias: polar residues. Residues 50–62 (PKRRRTERIKRER) are compositionally biased toward basic residues. 2 stretches are compositionally biased toward basic and acidic residues: residues 63-74 (IHTAVNRDLENR) and 99-112 (KKHEEEKEKQEKEV). The stretch at 94–122 (KTATTKKHEEEKEKQEKEVDMYANLSDEK) forms a coiled coil.

Belongs to the UPF0547 family.

The protein is UPF0547 protein C16orf87 homolog of Xenopus laevis (African clawed frog).